A 433-amino-acid polypeptide reads, in one-letter code: Glutamate-1-semialdehyde 2,1-aminomutase (433 aa).

Lys273 is modified (N6-(pyridoxal phosphate)lysine).

Belongs to the class-III pyridoxal-phosphate-dependent aminotransferase family. HemL subfamily. As to quaternary structure, homodimer. Requires pyridoxal 5'-phosphate as cofactor.

Its subcellular location is the cytoplasm. It catalyses the reaction (S)-4-amino-5-oxopentanoate = 5-aminolevulinate. The protein operates within porphyrin-containing compound metabolism; protoporphyrin-IX biosynthesis; 5-aminolevulinate from L-glutamyl-tRNA(Glu): step 2/2. It participates in porphyrin-containing compound metabolism; chlorophyll biosynthesis. The sequence is that of Glutamate-1-semialdehyde 2,1-aminomutase from Crocosphaera subtropica (strain ATCC 51142 / BH68) (Cyanothece sp. (strain ATCC 51142)).